The chain runs to 230 residues: 5'-methylthioadenosine/S-adenosylhomocysteine nucleosidase (230 aa).

The active-site Proton acceptor is the Glu12. Substrate contacts are provided by residues Gly78, Ile153, and 174–175; that span reads ME. The Proton donor role is filled by Asp198.

This sequence belongs to the PNP/UDP phosphorylase family. MtnN subfamily.

It carries out the reaction S-adenosyl-L-homocysteine + H2O = S-(5-deoxy-D-ribos-5-yl)-L-homocysteine + adenine. It catalyses the reaction S-methyl-5'-thioadenosine + H2O = 5-(methylsulfanyl)-D-ribose + adenine. The enzyme catalyses 5'-deoxyadenosine + H2O = 5-deoxy-D-ribose + adenine. It functions in the pathway amino-acid biosynthesis; L-methionine biosynthesis via salvage pathway; S-methyl-5-thio-alpha-D-ribose 1-phosphate from S-methyl-5'-thioadenosine (hydrolase route): step 1/2. Catalyzes the irreversible cleavage of the glycosidic bond in both 5'-methylthioadenosine (MTA) and S-adenosylhomocysteine (SAH/AdoHcy) to adenine and the corresponding thioribose, 5'-methylthioribose and S-ribosylhomocysteine, respectively. Also cleaves 5'-deoxyadenosine, a toxic by-product of radical S-adenosylmethionine (SAM) enzymes, into 5-deoxyribose and adenine. The sequence is that of 5'-methylthioadenosine/S-adenosylhomocysteine nucleosidase from Shewanella frigidimarina (strain NCIMB 400).